Consider the following 377-residue polypeptide: Succinyl-diaminopimelate desuccinylase (377 aa).

His66 is a Zn(2+) binding site. Residue Asp68 is part of the active site. Position 99 (Asp99) interacts with Zn(2+). Glu133 functions as the Proton acceptor in the catalytic mechanism. 3 residues coordinate Zn(2+): Glu134, Glu162, and His348.

It belongs to the peptidase M20A family. DapE subfamily. As to quaternary structure, homodimer. It depends on Zn(2+) as a cofactor. Co(2+) serves as cofactor.

It carries out the reaction N-succinyl-(2S,6S)-2,6-diaminopimelate + H2O = (2S,6S)-2,6-diaminopimelate + succinate. The protein operates within amino-acid biosynthesis; L-lysine biosynthesis via DAP pathway; LL-2,6-diaminopimelate from (S)-tetrahydrodipicolinate (succinylase route): step 3/3. Functionally, catalyzes the hydrolysis of N-succinyl-L,L-diaminopimelic acid (SDAP), forming succinate and LL-2,6-diaminopimelate (DAP), an intermediate involved in the bacterial biosynthesis of lysine and meso-diaminopimelic acid, an essential component of bacterial cell walls. The chain is Succinyl-diaminopimelate desuccinylase from Xylella fastidiosa (strain M12).